Consider the following 1012-residue polypeptide: Formate dehydrogenase 2 subunit alpha (cytochrome c-553) (1012 aa).

Residues 1–33 (MKTTRRSFLKLVGVSVVGLSLGQLGFDLEDAQA) constitute a signal peptide (tat-type signal). The 4Fe-4S Mo/W bis-MGD-type domain occupies 43 to 99 (AKEVGTVCPFCSVCCQVIAYVRNGKLVSTEGDPDFPVNEGALCAKGAALFSMYTNPH). Cys50, Cys53, Cys57, and Cys85 together coordinate [4Fe-4S] cluster. Residue Sec189 participates in W-bis(molybdopterin guanine dinucleotide) binding. A non-standard amino acid (selenocysteine) is located at residue Sec189. Ca(2+) contacts are provided by Thr389, Arg391, Lys394, Leu424, and Asn426.

This sequence belongs to the prokaryotic molybdopterin-containing oxidoreductase family. As to quaternary structure, heterotrimer of cytochrome c3 FDH2C and formate dehydrogenase FDH2 alpha and beta subunits that forms the FdhABC(3) complex. [4Fe-4S] cluster is required as a cofactor. It depends on W-bis(molybdopterin guanine dinucleotide) as a cofactor. In terms of processing, predicted to be exported by the Tat system. The position of the signal peptide cleavage has not been experimentally proven.

The protein resides in the periplasm. The enzyme catalyses 2 Fe(III)-[cytochrome c553] + formate = 2 Fe(II)-[cytochrome c553] + CO2 + H(+). In terms of biological role, alpha chain of the formate dehydrogenase (FDH) that catalyzes the reversible two-electron oxidation of formate to carbon dioxide. The alpha subunit of formate dehydrogenase forms the active site. The protein is Formate dehydrogenase 2 subunit alpha (cytochrome c-553) of Nitratidesulfovibrio vulgaris (strain ATCC 29579 / DSM 644 / CCUG 34227 / NCIMB 8303 / VKM B-1760 / Hildenborough) (Desulfovibrio vulgaris).